Reading from the N-terminus, the 487-residue chain is Malonate-semialdehyde dehydrogenase 3 (487 aa).

NAD(+)-binding residues include Phe-154, Lys-178, Glu-181, Arg-182, and Ser-231. The active-site Nucleophile is the Cys-286. NAD(+) is bound at residue Glu-386.

The protein belongs to the aldehyde dehydrogenase family. IolA subfamily. Homotetramer.

It carries out the reaction 3-oxopropanoate + NAD(+) + CoA + H2O = hydrogencarbonate + acetyl-CoA + NADH + H(+). The catalysed reaction is 2-methyl-3-oxopropanoate + NAD(+) + CoA + H2O = propanoyl-CoA + hydrogencarbonate + NADH + H(+). It functions in the pathway polyol metabolism; myo-inositol degradation into acetyl-CoA; acetyl-CoA from myo-inositol: step 7/7. Catalyzes the oxidation of malonate semialdehyde (MSA) and methylmalonate semialdehyde (MMSA) into acetyl-CoA and propanoyl-CoA, respectively. Is involved in a myo-inositol catabolic pathway. Bicarbonate, and not CO2, is the end-product of the enzymatic reaction. This chain is Malonate-semialdehyde dehydrogenase 3, found in Bacillus cereus (strain ZK / E33L).